The following is a 155-amino-acid chain: MSARSCSQNARTIFELCDECNITLPTLQIGCIFCKKWLLTTEVLSFAFRDLRVVWRDGYPFAACLACLQFHGKISQYRHFDYAAYADTVEEETKQTVFDLCIRCCKCHKPLSPVEKVQHIVQKAQFFKIHSVWKGYCLHCWKSCMEKRRRSETMC.

2 zinc fingers span residues 31–67 (CIFCKKWLLTTEVLSFAFRDLRVVWRDGYPFAACLAC) and 104–140 (CCKCHKPLSPVEKVQHIVQKAQFFKIHSVWKGYCLHC).

The protein belongs to the papillomaviridae E6 protein family. Forms homodimers. Interacts with ubiquitin-protein ligase UBE3A/E6-AP; this interaction stimulates UBE3A ubiquitin activity. Interacts with host TP53 and EP300; this interaction inhibits TP53 activity.

The protein localises to the host cytoplasm. It is found in the host nucleus. Its function is as follows. This protein may be involved in the oncogenic potential of this virus (cervical neoplasia-associated virus). Functionally, plays a major role in the induction and maintenance of cellular transformation. E6 associates with host UBE3A/E6-AP ubiquitin-protein ligase and modulates its activity. Sequesters tumor suppressor TP53 in the host cytoplasm and modulates its activity by interacting with host EP300 that results in the reduction of TP53 acetylation and activation. In turn, apoptosis induced by DNA damage is inhibited. E6 also protects host keratinocytes from apoptosis by mediating the degradation of host BAK1. May also inhibit host immune response. This chain is Protein E6, found in Human papillomavirus 43.